The chain runs to 286 residues: Undecaprenyl-diphosphatase (286 aa).

The next 7 helical transmembrane spans lie at 50 to 70, 97 to 117, 126 to 146, 156 to 176, 200 to 220, 236 to 256, and 264 to 284; these read GAAFTAITQLGTETAVIVYFW, MGWLVILGSLPIIVLGLIFQD, LWIVATMLIVFGLILAVADAV, LTYKHGIFYGFAQAMALIPGV, SFLLAIPAVFGSGLYQLYKVM, LATLIAFVVGYVIIGWFLKFV, and FVWYRIFLGLALYLLLGFNVI.

Belongs to the UppP family.

The protein localises to the cell membrane. It catalyses the reaction di-trans,octa-cis-undecaprenyl diphosphate + H2O = di-trans,octa-cis-undecaprenyl phosphate + phosphate + H(+). In terms of biological role, catalyzes the dephosphorylation of undecaprenyl diphosphate (UPP). Confers resistance to bacitracin. The protein is Undecaprenyl-diphosphatase of Arthrobacter sp. (strain FB24).